Reading from the N-terminus, the 180-residue chain is Acireductone dioxygenase (180 aa).

Residues His97, His99, Glu103, and His141 each contribute to the Fe(2+) site. Ni(2+)-binding residues include His97, His99, Glu103, and His141.

Belongs to the acireductone dioxygenase (ARD) family. In terms of assembly, monomer. The cofactor is Fe(2+). Requires Ni(2+) as cofactor.

It catalyses the reaction 1,2-dihydroxy-5-(methylsulfanyl)pent-1-en-3-one + O2 = 3-(methylsulfanyl)propanoate + CO + formate + 2 H(+). The enzyme catalyses 1,2-dihydroxy-5-(methylsulfanyl)pent-1-en-3-one + O2 = 4-methylsulfanyl-2-oxobutanoate + formate + 2 H(+). The protein operates within amino-acid biosynthesis; L-methionine biosynthesis via salvage pathway; L-methionine from S-methyl-5-thio-alpha-D-ribose 1-phosphate: step 5/6. In terms of biological role, catalyzes 2 different reactions between oxygen and the acireductone 1,2-dihydroxy-3-keto-5-methylthiopentene (DHK-MTPene) depending upon the metal bound in the active site. Fe-containing acireductone dioxygenase (Fe-ARD) produces formate and 2-keto-4-methylthiobutyrate (KMTB), the alpha-ketoacid precursor of methionine in the methionine recycle pathway. Ni-containing acireductone dioxygenase (Ni-ARD) produces methylthiopropionate, carbon monoxide and formate, and does not lie on the methionine recycle pathway. In Yersinia enterocolitica serotype O:8 / biotype 1B (strain NCTC 13174 / 8081), this protein is Acireductone dioxygenase.